Reading from the N-terminus, the 528-residue chain is GMP synthase [glutamine-hydrolyzing] (528 aa).

Positions Ala13–Asp204 constitute a Glutamine amidotransferase type-1 domain. Cys90 (nucleophile) is an active-site residue. Residues His178 and Glu180 contribute to the active site. Residues Trp205–Arg403 enclose the GMPS ATP-PPase domain. Ser232 to Ser238 provides a ligand contact to ATP.

Homodimer.

The catalysed reaction is XMP + L-glutamine + ATP + H2O = GMP + L-glutamate + AMP + diphosphate + 2 H(+). The protein operates within purine metabolism; GMP biosynthesis; GMP from XMP (L-Gln route): step 1/1. Functionally, catalyzes the synthesis of GMP from XMP. This chain is GMP synthase [glutamine-hydrolyzing], found in Synechococcus sp. (strain CC9605).